A 139-amino-acid chain; its full sequence is Actin-depolymerizing factor 1 (139 aa).

One can recognise an ADF-H domain in the interval 5–139 (ASGMAVCDEC…SMDIVKSRAL (135 aa)).

The protein belongs to the actin-binding proteins ADF family.

In terms of biological role, actin-depolymerizing protein. Severs actin filaments (F-actin) and binds to actin monomers. In Oryza sativa subsp. japonica (Rice), this protein is Actin-depolymerizing factor 1 (ADF1).